The chain runs to 239 residues: tRNA (guanine-N(1)-)-methyltransferase (239 aa).

S-adenosyl-L-methionine is bound by residues Gly112 and 132-137 (IGDYVL).

This sequence belongs to the RNA methyltransferase TrmD family. As to quaternary structure, homodimer.

The protein resides in the cytoplasm. It catalyses the reaction guanosine(37) in tRNA + S-adenosyl-L-methionine = N(1)-methylguanosine(37) in tRNA + S-adenosyl-L-homocysteine + H(+). Its function is as follows. Specifically methylates guanosine-37 in various tRNAs. The sequence is that of tRNA (guanine-N(1)-)-methyltransferase from Rhodospirillum rubrum (strain ATCC 11170 / ATH 1.1.1 / DSM 467 / LMG 4362 / NCIMB 8255 / S1).